The chain runs to 206 residues: Proteasome subunit beta 1 (206 aa).

The propeptide at 1–5 (MLMKG) is removed in mature form; by autocatalysis. Thr6 acts as the Nucleophile in catalysis.

This sequence belongs to the peptidase T1B family. As to quaternary structure, the 20S proteasome core is composed of 14 alpha and 14 beta subunits that assemble into four stacked heptameric rings, resulting in a barrel-shaped structure. The two inner rings, each composed of seven catalytic beta subunits, are sandwiched by two outer rings, each composed of seven alpha subunits. The catalytic chamber with the active sites is on the inside of the barrel. Has a gated structure, the ends of the cylinder being occluded by the N-termini of the alpha-subunits. Is capped at one or both ends by the proteasome regulatory ATPase, PAN.

It is found in the cytoplasm. It catalyses the reaction Cleavage of peptide bonds with very broad specificity.. With respect to regulation, the formation of the proteasomal ATPase PAN-20S proteasome complex, via the docking of the C-termini of PAN into the intersubunit pockets in the alpha-rings, triggers opening of the gate for substrate entry. Interconversion between the open-gate and close-gate conformations leads to a dynamic regulation of the 20S proteasome proteolysis activity. Its function is as follows. Component of the proteasome core, a large protease complex with broad specificity involved in protein degradation. This Korarchaeum cryptofilum (strain OPF8) protein is Proteasome subunit beta 1.